Consider the following 659-residue polypeptide: Exoribonuclease 2 (659 aa).

An RNB domain is found at 189-531 (RKDLTALHFV…NHRLIKACIA (343 aa)). The S1 motif domain occupies 576–658 (KPEFQAEVQD…ETRSLIGNLV (83 aa)).

This sequence belongs to the RNR ribonuclease family. RNase II subfamily.

Its subcellular location is the cytoplasm. It carries out the reaction Exonucleolytic cleavage in the 3'- to 5'-direction to yield nucleoside 5'-phosphates.. Functionally, involved in mRNA degradation. Hydrolyzes single-stranded polyribonucleotides processively in the 3' to 5' direction. This chain is Exoribonuclease 2, found in Actinobacillus succinogenes (strain ATCC 55618 / DSM 22257 / CCUG 43843 / 130Z).